The chain runs to 142 residues: MPPKKKLAAVVKVQLPAGQATPAPPVGTALGPHGVNIMEFCKQYNAATESQRGNIIPVEISIYEDRSFSFVTKTPPAPALILKAAGLEKGASTPSRSVAGSITRDQVREIAQTKLPDLNTTSLEAAEKIIAGTARSMGIEVK.

Belongs to the universal ribosomal protein uL11 family. Part of the ribosomal stalk of the 50S ribosomal subunit. Interacts with L10 and the large rRNA to form the base of the stalk. L10 forms an elongated spine to which L12 dimers bind in a sequential fashion forming a multimeric L10(L12)X complex. Post-translationally, one or more lysine residues are methylated.

In terms of biological role, forms part of the ribosomal stalk which helps the ribosome interact with GTP-bound translation factors. In Thermobifida fusca (strain YX), this protein is Large ribosomal subunit protein uL11.